Reading from the N-terminus, the 111-residue chain is Probable 4-amino-4-deoxy-L-arabinose-phosphoundecaprenol flippase subunit ArnE (111 aa).

The Cytoplasmic segment spans residues methionine 1 to histidine 35. Residues isoleucine 36–leucine 56 form a helical membrane-spanning segment. Residues leucine 40–serine 109 enclose the EamA domain. Topologically, residues valine 57–asparagine 60 are periplasmic. The helical transmembrane segment at valine 61–alanine 81 threads the bilayer. Topologically, residues valine 82–glutamate 87 are cytoplasmic. Residues proline 88 to glycine 108 form a helical membrane-spanning segment. The Periplasmic segment spans residues serine 109 to valine 111.

This sequence belongs to the ArnE family. As to quaternary structure, heterodimer of ArnE and ArnF.

Its subcellular location is the cell inner membrane. It participates in bacterial outer membrane biogenesis; lipopolysaccharide biosynthesis. Translocates 4-amino-4-deoxy-L-arabinose-phosphoundecaprenol (alpha-L-Ara4N-phosphoundecaprenol) from the cytoplasmic to the periplasmic side of the inner membrane. This chain is Probable 4-amino-4-deoxy-L-arabinose-phosphoundecaprenol flippase subunit ArnE, found in Escherichia coli (strain ATCC 8739 / DSM 1576 / NBRC 3972 / NCIMB 8545 / WDCM 00012 / Crooks).